A 547-amino-acid chain; its full sequence is MTKTDPAPMAPPPRGEEEEEEEEDEPVPEAPSPTQERRQKPVVHPSAPAPLPKDYAFTFFDPNDPACQEILFDPKTTIPELFAIVRQWVPQVQHKIDVIGNEILRRGCHVNDRDGLTDMTLLHYACKAGAHGVGDPAAAVRLSQQLLALGADVTLRSRWTNMNALHYAAYFDVPDLVRVLLKGARPRVVNSTCSDFNHGSALHIAASNLCLGAAKCLLEHGANPALRNRKGQVPAEVVPDPMDMSLDKAEAALVAKELRTLLEEAVPLSCTLPKVTLPNYDNVPGNLMLSALGLRLGDRVLLDGQKTGTLRFCGTTEFASGQWVGVELDEPEGKNDGSVGGVRYFICPPKQGLFASVSKVSKAVDAPPSSVTSTPRTPRMDFSRVTGKGRREHKGKKKSPSSPSLGSLQQREGAKAEVGDQVLVAGQKQGIVRFYGKTDFAPGYWYGIELDQPTGKHDGSVFGVRYFTCAPRHGVFAPASRIQRIGGSTDPPGDSVGAKKVHQVTMTQPKRTFTTVRTPKDIASENSISRLLFCCWFPWMLRAEMQS.

The interval 1-49 (MTKTDPAPMAPPPRGEEEEEEEEDEPVPEAPSPTQERRQKPVVHPSAPA) is disordered. Over residues 16–27 (EEEEEEEEDEPV) the composition is skewed to acidic residues. 3 ANK repeats span residues 117–158 (TDMT…LRSR), 160–191 (TNMNALHYAAYFDVPDLVRVLLKGARPRVVNS), and 197–229 (NHGSALHIAASNLCLGAAKCLLEHGANPALRNR). The 43-residue stretch at 314-356 (GTTEFASGQWVGVELDEPEGKNDGSVGGVRYFICPPKQGLFAS) folds into the CAP-Gly 1 domain. The interval 365–413 (DAPPSSVTSTPRTPRMDFSRVTGKGRREHKGKKKSPSSPSLGSLQQREG) is disordered. A compositionally biased stretch (low complexity) spans 367–377 (PPSSVTSTPRT). T374 is subject to Phosphothreonine. Residues 387 to 399 (GKGRREHKGKKKS) are compositionally biased toward basic residues. S399 and S401 each carry phosphoserine. The region spanning 436–478 (GKTDFAPGYWYGIELDQPTGKHDGSVFGVRYFTCAPRHGVFAP) is the CAP-Gly 2 domain. The interval 488–547 (STDPPGDSVGAKKVHQVTMTQPKRTFTTVRTPKDIASENSISRLLFCCWFPWMLRAEMQS) is goLD. 2 S-palmitoyl cysteine lipidation sites follow: C534 and C535.

Homodimer. Interacts with AKT1 and AKT2; when AKT1 and AKT2 are phosphorylated and activated, affinity is higher for AKT2. Interacts with ZDHHC13 (via ANK repeats). Interacts with ZDHHC17 (via ANK repeats). In terms of processing, palmitoylation by ZDHHC17 regulates association with the plasma membrane.

The protein localises to the cell membrane. Its subcellular location is the cytoplasm. The protein resides in the golgi apparatus. It localises to the golgi stack. Functionally, functions as a cytoplasmic linker protein. Involved in TGN-endosome dynamics. May modulate the cellular compartmentalization of AKT kinase family and promote its cell membrane localization, thereby playing a role in glucose transport in adipocytes. This chain is CAP-Gly domain-containing linker protein 3 (Clip3), found in Mus musculus (Mouse).